Consider the following 142-residue polypeptide: Hemoglobin subunit alpha (142 aa).

Residues 2–142 (VLSPADKSNV…VSTVLTSKYR (141 aa)) enclose the Globin domain. Position 4 is a phosphoserine (serine 4). Lysine 8 and lysine 12 each carry N6-succinyllysine. Lysine 17 carries the N6-acetyllysine; alternate modification. Lysine 17 bears the N6-succinyllysine; alternate mark. Tyrosine 25 carries the post-translational modification Phosphotyrosine. The residue at position 36 (serine 36) is a Phosphoserine. Lysine 41 bears the N6-succinyllysine mark. Serine 50 bears the Phosphoserine mark. An O2-binding site is contributed by histidine 59. Histidine 88 lines the heme b pocket. The residue at position 103 (serine 103) is a Phosphoserine. Threonine 109 carries the post-translational modification Phosphothreonine. Residues serine 125 and serine 132 each carry the phosphoserine modification. 2 positions are modified to phosphothreonine: threonine 135 and threonine 138. Serine 139 carries the phosphoserine modification.

The protein belongs to the globin family. Heterotetramer of two alpha chains and two beta chains. In terms of tissue distribution, red blood cells.

In terms of biological role, involved in oxygen transport from the lung to the various peripheral tissues. Functionally, hemopressin acts as an antagonist peptide of the cannabinoid receptor CNR1. Hemopressin-binding efficiently blocks cannabinoid receptor CNR1 and subsequent signaling. This is Hemoglobin subunit alpha (HBA) from Macaca fuscata fuscata (Japanese macaque).